The sequence spans 430 residues: Adenylosuccinate synthetase (430 aa).

GTP is bound by residues Gly12–Lys18 and Gly40–Thr42. Catalysis depends on Asp13, which acts as the Proton acceptor. 2 residues coordinate Mg(2+): Asp13 and Gly40. Residues Asp13–Lys16, Asn38–His41, Thr129, Arg143, Gln223, Thr238, and Arg302 contribute to the IMP site. His41 acts as the Proton donor in catalysis. Thr298–Arg304 contributes to the substrate binding site. GTP is bound by residues Arg304, Lys330–Asp332, and Ser412–Gly414.

It belongs to the adenylosuccinate synthetase family. Homodimer. The cofactor is Mg(2+).

Its subcellular location is the cytoplasm. The catalysed reaction is IMP + L-aspartate + GTP = N(6)-(1,2-dicarboxyethyl)-AMP + GDP + phosphate + 2 H(+). It participates in purine metabolism; AMP biosynthesis via de novo pathway; AMP from IMP: step 1/2. Functionally, plays an important role in the de novo pathway of purine nucleotide biosynthesis. Catalyzes the first committed step in the biosynthesis of AMP from IMP. The sequence is that of Adenylosuccinate synthetase from Desulforudis audaxviator (strain MP104C).